The following is a 562-amino-acid chain: DNA ligase (562 aa).

Glutamate 252 contributes to the ATP binding site. The active-site N6-AMP-lysine intermediate is lysine 254. Arginine 259, arginine 274, glutamate 303, phenylalanine 343, arginine 419, and lysine 425 together coordinate ATP.

The protein belongs to the ATP-dependent DNA ligase family. It depends on Mg(2+) as a cofactor.

The enzyme catalyses ATP + (deoxyribonucleotide)n-3'-hydroxyl + 5'-phospho-(deoxyribonucleotide)m = (deoxyribonucleotide)n+m + AMP + diphosphate.. In terms of biological role, DNA ligase that seals nicks in double-stranded DNA during DNA replication, DNA recombination and DNA repair. The sequence is that of DNA ligase from Methanococcus aeolicus (strain ATCC BAA-1280 / DSM 17508 / OCM 812 / Nankai-3).